The following is a 71-amino-acid chain: Beta-defensin 10 (71 aa).

Positions 1–23 (MKTLCSLLLIGCLLFSYDTPVVG) are cleaved as a signal peptide. 3 cysteine pairs are disulfide-bonded: C37–C66, C44–C59, and C49–C67.

This sequence belongs to the beta-defensin family.

It is found in the secreted. In terms of biological role, has antibacterial activity. The protein is Beta-defensin 10 (Defb10) of Rattus norvegicus (Rat).